Reading from the N-terminus, the 301-residue chain is Probable alpha-L-glutamate ligase (301 aa).

The ATP-grasp domain occupies 104–287 (LQLLARKGVG…VAGMIINWTE (184 aa)). ATP is bound by residues lysine 141, 178 to 179 (EF), aspartate 187, and 211 to 213 (RSN). The Mg(2+) site is built by aspartate 248, glutamate 260, and asparagine 262. Aspartate 248, glutamate 260, and asparagine 262 together coordinate Mn(2+).

This sequence belongs to the RimK family. It depends on Mg(2+) as a cofactor. Requires Mn(2+) as cofactor.

This Marinobacter nauticus (strain ATCC 700491 / DSM 11845 / VT8) (Marinobacter aquaeolei) protein is Probable alpha-L-glutamate ligase.